Consider the following 493-residue polypeptide: Alpha-amylase-related protein (493 aa).

Residues 1–19 (MFKFALTLTLCLAGSLSLA) form the signal peptide. At Q20 the chain carries Pyrrolidone carboxylic acid. C47 and C103 are joined by a disulfide. 3 residues coordinate Ca(2+): N117, Q168, and D177. C156 and C170 are joined by a disulfide. R205 contacts chloride. The active-site Nucleophile is the D207. Position 211 (H211) interacts with Ca(2+). The active-site Proton donor is the E244. N307 and R342 together coordinate chloride. Disulfide bonds link C375/C381, C417/C440, and C447/C459.

This sequence belongs to the glycosyl hydrolase 13 family. As to quaternary structure, monomer. Ca(2+) serves as cofactor. It depends on chloride as a cofactor.

Its subcellular location is the secreted. The enzyme catalyses Endohydrolysis of (1-&gt;4)-alpha-D-glucosidic linkages in polysaccharides containing three or more (1-&gt;4)-alpha-linked D-glucose units.. The protein is Alpha-amylase-related protein (Amyrel) of Drosophila simulans (Fruit fly).